The chain runs to 363 residues: Fructose-bisphosphate aldolase A (363 aa).

Position 43 (R43) interacts with beta-D-fructose 1,6-bisphosphate. The active-site Proton acceptor is E188. The active-site Schiff-base intermediate with dihydroxyacetone-P is K230. Beta-D-fructose 1,6-bisphosphate is bound by residues S272 to G274, S301, and R304.

It belongs to the class I fructose-bisphosphate aldolase family. Tetramer.

The enzyme catalyses beta-D-fructose 1,6-bisphosphate = D-glyceraldehyde 3-phosphate + dihydroxyacetone phosphate. Its pathway is carbohydrate degradation; glycolysis; D-glyceraldehyde 3-phosphate and glycerone phosphate from D-glucose: step 4/4. Functionally, plays a key role in glycolysis and gluconeogenesis. The polypeptide is Fructose-bisphosphate aldolase A (Salmo salar (Atlantic salmon)).